Reading from the N-terminus, the 148-residue chain is Copper transport protein ctr6 (148 aa).

Residues 1-33 (MNHGGNSTMRHCSMKMTFNTDYDNLCIVFKSWH) are Extracellular-facing. The helical transmembrane segment at 34 to 54 (IGNLSQFLLSLLAIAILGYLF) threads the bilayer. Residues 55–108 (ERLRSFTSLKETEFQRGYAGQQSEGLLTHHSKSLKSGRPFRLCALYAVQLVFSY) lie on the Cytoplasmic side of the membrane. The helical transmembrane segment at 109 to 129 (FLMLVAMTYNAYVILAIAIGA) threads the bilayer. The Extracellular segment spans residues 130 to 148 (AFGYRRSHCDTVQTVGLCH).

This sequence belongs to the copper transporter (Ctr) (TC 1.A.56) family. SLC31A subfamily. As to quaternary structure, homotrimer.

Its subcellular location is the vacuole membrane. Functionally, mobilizes stored copper from the vacuole to the cytoplasm under conditions of copper limitation. The protein is Copper transport protein ctr6 (ctr6) of Schizosaccharomyces pombe (strain 972 / ATCC 24843) (Fission yeast).